The following is a 154-amino-acid chain: Protein X (154 aa).

The mitochondrial targeting sequence stretch occupies residues 68 to 117 (PCALRFTSARRMETTVNAHRNLPKVLHKRTLGLSAMSTTDLEAHFKDCVF).

This sequence belongs to the orthohepadnavirus protein X family. In terms of assembly, may form homodimer. May interact with host CEBPA, CFLAR, CREB1, DDB1, E4F1, HBXIP, HSPD1/HSP60, NFKBIA, POLR2E and SMAD4. Interacts with host SMC5-SMC6 complex and induces its degradation. Interacts with host TRPC4AP; leading to prevent ubiquitination of TRPC4AP. Interacts with host PLSCR1; this interaction promotes ubiquitination and degradation of HBx and impairs HBx-mediated cell proliferation. Post-translationally, a fraction may be phosphorylated in insect cells and HepG2 cells, a human hepatoblastoma cell line. Phosphorylated in vitro by host protein kinase C or mitogen-activated protein kinase. N-acetylated in insect cells.

It is found in the host cytoplasm. The protein resides in the host nucleus. Its subcellular location is the host mitochondrion. In terms of biological role, multifunctional protein that plays a role in silencing host antiviral defenses and promoting viral transcription. Does not seem to be essential for HBV infection. May be directly involved in development of cirrhosis and liver cancer (hepatocellular carcinoma). Most of cytosolic activities involve modulation of cytosolic calcium. The effect on apoptosis is controversial depending on the cell types in which the studies have been conducted. May induce apoptosis by localizing in mitochondria and causing loss of mitochondrial membrane potential. May also modulate apoptosis by binding host CFLAR, a key regulator of the death-inducing signaling complex (DISC). Promotes viral transcription by using the host E3 ubiquitin ligase DDB1 to target the SMC5-SMC6 complex to proteasomal degradation. This host complex would otherwise bind to viral episomal DNA, and prevents its transcription. Moderately stimulates transcription of many different viral and cellular transcription elements. Promoters and enhancers stimulated by HBx contain DNA binding sites for NF-kappa-B, AP-1, AP-2, c-EBP, ATF/CREB, or the calcium-activated factor NF-AT. This Hepatitis B virus genotype B2 (isolate Indonesia/pIDW420/1988) (HBV-B) protein is Protein X.